Here is a 377-residue protein sequence, read N- to C-terminus: Queuine tRNA-ribosyltransferase (377 aa).

The active-site Proton acceptor is the D89. Residues 89-93, D143, Q188, and G215 contribute to the substrate site; that span reads DSGGF. Residues 246–252 form an RNA binding region; sequence GVGKPED. Catalysis depends on D265, which acts as the Nucleophile. The tract at residues 270–274 is RNA binding; important for wobble base 34 recognition; that stretch reads TRNAR. The Zn(2+) site is built by C303, C305, C308, and H334.

The protein belongs to the queuine tRNA-ribosyltransferase family. As to quaternary structure, homodimer. Within each dimer, one monomer is responsible for RNA recognition and catalysis, while the other monomer binds to the replacement base PreQ1. Zn(2+) serves as cofactor.

The enzyme catalyses 7-aminomethyl-7-carbaguanine + guanosine(34) in tRNA = 7-aminomethyl-7-carbaguanosine(34) in tRNA + guanine. It participates in tRNA modification; tRNA-queuosine biosynthesis. In terms of biological role, catalyzes the base-exchange of a guanine (G) residue with the queuine precursor 7-aminomethyl-7-deazaguanine (PreQ1) at position 34 (anticodon wobble position) in tRNAs with GU(N) anticodons (tRNA-Asp, -Asn, -His and -Tyr). Catalysis occurs through a double-displacement mechanism. The nucleophile active site attacks the C1' of nucleotide 34 to detach the guanine base from the RNA, forming a covalent enzyme-RNA intermediate. The proton acceptor active site deprotonates the incoming PreQ1, allowing a nucleophilic attack on the C1' of the ribose to form the product. After dissociation, two additional enzymatic reactions on the tRNA convert PreQ1 to queuine (Q), resulting in the hypermodified nucleoside queuosine (7-(((4,5-cis-dihydroxy-2-cyclopenten-1-yl)amino)methyl)-7-deazaguanosine). The polypeptide is Queuine tRNA-ribosyltransferase (Acinetobacter baumannii (strain AB307-0294)).